A 351-amino-acid chain; its full sequence is Peroxisomal membrane protein PEX14 (351 aa).

The segment at 54 to 75 (KARTGTVQASPSQQSVVPPRPP) is disordered. Residues 60–70 (VQASPSQQSVV) show a composition bias toward low complexity. The SH3-binding signature appears at 83–91 (APPLPERDW). The interval 243–351 (APQLSTPPSE…RGIPAWQLNA (109 aa)) is disordered. Residues 245–258 (QLSTPPSESTSRQS) show a composition bias toward polar residues. Residues 283–293 (VLSREKDKDVN) are compositionally biased toward basic and acidic residues. Polar residues predominate over residues 294 to 303 (SDSIAQYEQR). Low complexity predominate over residues 320 to 334 (SASNGGSSTTSGVAG).

Belongs to the peroxin-14 family. Interacts with PEX13 (via SH3 domain); forming the PEX13-PEX14 docking complex. Interacts with PEX5 (via WxxxF/Y motifs).

It localises to the peroxisome membrane. In terms of biological role, component of the PEX13-PEX14 docking complex, a translocon channel that specifically mediates the import of peroxisomal cargo proteins bound to PEX5 receptor. The PEX13-PEX14 docking complex forms a large import pore which can be opened to a diameter of about 9 nm. Mechanistically, PEX5 receptor along with cargo proteins associates with the PEX14 subunit of the PEX13-PEX14 docking complex in the cytosol, leading to the insertion of the receptor into the organelle membrane with the concomitant translocation of the cargo into the peroxisome matrix. The protein is Peroxisomal membrane protein PEX14 of Pichia angusta (Yeast).